The sequence spans 118 residues: MARIAGINIPDHKHTVIALTAIYGIGKTRSQAICAAAGIAENVKISELSEEQIDKLRDEVGKFTVEGDLRREVTLNIKRLLDLGCYRGLRHRRGLPVRGQRTKTNARTRKGPRKPIKK.

Positions Gly94 to Lys118 are disordered.

Belongs to the universal ribosomal protein uS13 family. In terms of assembly, part of the 30S ribosomal subunit. Forms a loose heterodimer with protein S19. Forms two bridges to the 50S subunit in the 70S ribosome.

Its function is as follows. Located at the top of the head of the 30S subunit, it contacts several helices of the 16S rRNA. In the 70S ribosome it contacts the 23S rRNA (bridge B1a) and protein L5 of the 50S subunit (bridge B1b), connecting the 2 subunits; these bridges are implicated in subunit movement. Contacts the tRNAs in the A and P-sites. This is Small ribosomal subunit protein uS13 from Mannheimia succiniciproducens (strain KCTC 0769BP / MBEL55E).